Consider the following 109-residue polypeptide: Oncomodulin (109 aa).

N-acetylserine is present on S2. 2 consecutive EF-hand domains span residues 39–74 (MSAS…FESG) and 78–109 (LTES…MVHS). Ca(2+) is bound by residues D52, D54, S56, Y58, E63, D91, D93, D95, K97, and E102.

Belongs to the parvalbumin family. Abundant in the organ of Corti.

Has some calmodulin-like activity with respect to enzyme activation and growth regulation. Binds two calcium ions. The protein is Oncomodulin (OCM) of Cavia porcellus (Guinea pig).